The primary structure comprises 356 residues: GTPase HflX (356 aa).

Residues 180–356 enclose the Hflx-type G domain; sequence PSIGIVGYTN…KIYQLATQLS (177 aa). Residues 186-193, 211-215, 232-235, 300-303, and 334-336 each bind GTP; these read GYTNSGKT, FTTMS, DTVG, NKID, and SAL. Mg(2+) is bound by residues T193 and T213.

The protein belongs to the TRAFAC class OBG-HflX-like GTPase superfamily. HflX GTPase family. In terms of assembly, monomer. Associates with the 50S ribosomal subunit. Does not associate with 70S ribosomes. It depends on Mg(2+) as a cofactor.

Its subcellular location is the cytoplasm. Its activity is regulated as follows. GTPase activity is stimulated by the presence of 50S ribosomal subunits. Hydrolysis is probably regulated by the HflX N-terminal domain. Functionally, GTPase that associates with the 50S ribosomal subunit and may have a role during protein synthesis or ribosome biogenesis. Specific for GTP. This Saccharolobus solfataricus (strain ATCC 35092 / DSM 1617 / JCM 11322 / P2) (Sulfolobus solfataricus) protein is GTPase HflX.